A 605-amino-acid polypeptide reads, in one-letter code: Glutamine--fructose-6-phosphate aminotransferase [isomerizing] (605 aa).

C2 serves as the catalytic Nucleophile; for GATase activity. Residues 2 to 219 (CGIVGVVGSK…DKELVVLTKD (218 aa)) form the Glutamine amidotransferase type-2 domain. 2 consecutive SIS domains span residues 285–424 (IIKG…AEGE) and 457–595 (VADL…VDKP). K600 (for Fru-6P isomerization activity) is an active-site residue.

As to quaternary structure, homodimer.

The protein localises to the cytoplasm. It catalyses the reaction D-fructose 6-phosphate + L-glutamine = D-glucosamine 6-phosphate + L-glutamate. Its function is as follows. Catalyzes the first step in hexosamine metabolism, converting fructose-6P into glucosamine-6P using glutamine as a nitrogen source. The sequence is that of Glutamine--fructose-6-phosphate aminotransferase [isomerizing] from Lactococcus lactis subsp. lactis (strain IL1403) (Streptococcus lactis).